Here is a 216-residue protein sequence, read N- to C-terminus: Phosducin-like protein 3 (216 aa).

A coiled-coil region spans residues 13 to 59 (AKTIEQQLDQQLDRLDNLDSDDLKVLREQRLREMKDLNNKKQEWLRN). In terms of domain architecture, Phosducin spans 29 to 163 (NLDSDDLKVL…DLGNCDDFAT (135 aa)).

It belongs to the phosducin family. Highly expressed in germline cells of the testis from the spermatogonia stage until the early spermatid stage but is no longer observed in late-stage spermatids in the distal end of the testis.

It catalyses the reaction [thioredoxin]-dithiol + NADP(+) = [thioredoxin]-disulfide + NADPH + H(+). Its function is as follows. Has redox activity with thioredoxin. Required for male fertility and maturation of sperm past the canoe stage during spermiogenesis. The protein is Phosducin-like protein 3 of Drosophila melanogaster (Fruit fly).